A 141-amino-acid polypeptide reads, in one-letter code: Hemoglobin subunit alpha (141 aa).

In terms of domain architecture, Globin spans 1 to 141 (VLSPADKTNV…VSTVLTSKYR (141 aa)). S3 is modified (phosphoserine). K7 is modified (N6-succinyllysine). The residue at position 8 (T8) is a Phosphothreonine. K11 carries the post-translational modification N6-succinyllysine. K16 is modified (N6-acetyllysine; alternate). K16 bears the N6-succinyllysine; alternate mark. Phosphotyrosine is present on Y24. An N6-succinyllysine modification is found at K40. S49 carries the post-translational modification Phosphoserine. Residue H58 participates in O2 binding. Residue H87 participates in heme b binding. Residue S102 is modified to Phosphoserine. T108 carries the post-translational modification Phosphothreonine. S124 is modified (phosphoserine). Phosphothreonine occurs at positions 134 and 137. Position 138 is a phosphoserine (S138).

The protein belongs to the globin family. Heterotetramer of two alpha chains and two beta chains. As to expression, red blood cells.

Functionally, involved in oxygen transport from the lung to the various peripheral tissues. Hemopressin acts as an antagonist peptide of the cannabinoid receptor CNR1. Hemopressin-binding efficiently blocks cannabinoid receptor CNR1 and subsequent signaling. In Phoca vitulina (Harbor seal), this protein is Hemoglobin subunit alpha (HBA).